Here is a 164-residue protein sequence, read N- to C-terminus: Disulfide bond formation protein B (164 aa).

The Cytoplasmic portion of the chain corresponds to 1-4; sequence MRII. Residues 5-21 traverse the membrane as a helical segment; sequence FLLIALICAGLVSYALY. Residues 22–39 are Periplasmic-facing; that stretch reads LQLADGLLPCPLCIFQRM. A disulfide bridge connects residues Cys31 and Cys34. The chain crosses the membrane as a helical span at residues 40–56; sequence AYWLVGITALFAFIHHP. At 57–62 the chain is on the cytoplasmic side; the sequence is QRLGRR. A helical transmembrane segment spans residues 63 to 80; the sequence is IYCGLIILFSLAGAIVAG. At 81-136 the chain is on the periplasmic side; sequence RQAWLVRFPEAFECGISPEEAFLNELPLARWWPDMFEANGDCTDGTWQFLSLTIPD. Cysteines 94 and 122 form a disulfide. Residues 137–155 form a helical membrane-spanning segment; the sequence is WSLLIFLAFSLIAGLLWRS. Topologically, residues 156–164 are cytoplasmic; sequence RSISSSNLK.

It belongs to the DsbB family.

The protein resides in the cell inner membrane. Required for disulfide bond formation in some periplasmic proteins. Acts by oxidizing the DsbA protein. This is Disulfide bond formation protein B from Nitrosomonas europaea (strain ATCC 19718 / CIP 103999 / KCTC 2705 / NBRC 14298).